The chain runs to 484 residues: Probable UDP-N-acetylglucosamine pyrophosphorylase (484 aa).

A Substrate binding motif is present at residues 107–110 (LAGG). Residues 107-110 (LAGG), K121, Q200, and G226 each bind UTP. N227 contacts substrate. D255 provides a ligand contact to UTP. Positions 304-305 (EY) match the Substrate binding motif. K377 contacts UTP. K407 is a binding site for substrate.

It belongs to the UDPGP type 1 family.

The protein localises to the cytoplasm. The enzyme catalyses N-acetyl-alpha-D-glucosamine 1-phosphate + UTP + H(+) = UDP-N-acetyl-alpha-D-glucosamine + diphosphate. The protein operates within nucleotide-sugar biosynthesis; UDP-N-acetyl-alpha-D-glucosamine biosynthesis; UDP-N-acetyl-alpha-D-glucosamine from N-acetyl-alpha-D-glucosamine 1-phosphate: step 1/1. In Caenorhabditis elegans, this protein is Probable UDP-N-acetylglucosamine pyrophosphorylase.